Here is a 159-residue protein sequence, read N- to C-terminus: Na(+)/H(+) antiporter subunit E1 (159 aa).

Helical transmembrane passes span 1-21 (MAIQ…LSGS), 27-47 (LLLG…ILPG), 49-69 (FYFI…VELL), and 101-121 (WQIV…VLGI).

Belongs to the CPA3 antiporters (TC 2.A.63) subunit E family. In terms of assembly, may form a heterooligomeric complex that consists of seven subunits: mnhA1, mnhB1, mnhC1, mnhD1, mnhE1, mnhF1 and mnhG1.

It is found in the cell membrane. Functionally, mnh complex is a Na(+)/H(+) antiporter involved in Na(+) excretion. This Staphylococcus haemolyticus (strain JCSC1435) protein is Na(+)/H(+) antiporter subunit E1 (mnhE1).